The sequence spans 73 residues: Translation initiation factor IF-1 (73 aa).

The S1-like domain maps to Met-1 to Lys-73.

The protein belongs to the IF-1 family. In terms of assembly, component of the 30S ribosomal translation pre-initiation complex which assembles on the 30S ribosome in the order IF-2 and IF-3, IF-1 and N-formylmethionyl-tRNA(fMet); mRNA recruitment can occur at any time during PIC assembly.

The protein localises to the cytoplasm. Its function is as follows. One of the essential components for the initiation of protein synthesis. Stabilizes the binding of IF-2 and IF-3 on the 30S subunit to which N-formylmethionyl-tRNA(fMet) subsequently binds. Helps modulate mRNA selection, yielding the 30S pre-initiation complex (PIC). Upon addition of the 50S ribosomal subunit IF-1, IF-2 and IF-3 are released leaving the mature 70S translation initiation complex. This is Translation initiation factor IF-1 from Cutibacterium acnes (strain DSM 16379 / KPA171202) (Propionibacterium acnes).